A 618-amino-acid chain; its full sequence is UvrABC system protein C (618 aa).

Residues 20–98 enclose the GIY-YIG domain; the sequence is TAPGVYRMYA…IKSLSPRYNV (79 aa). Residues 207 to 242 enclose the UVR domain; the sequence is DQLGEEIMHSMQQASEALEFERAARLRDLLSSLRSM.

The protein belongs to the UvrC family. Interacts with UvrB in an incision complex.

It is found in the cytoplasm. Functionally, the UvrABC repair system catalyzes the recognition and processing of DNA lesions. UvrC both incises the 5' and 3' sides of the lesion. The N-terminal half is responsible for the 3' incision and the C-terminal half is responsible for the 5' incision. In Xanthomonas campestris pv. campestris (strain 8004), this protein is UvrABC system protein C.